The chain runs to 158 residues: Protein-export protein SecB (158 aa).

The protein belongs to the SecB family. In terms of assembly, homotetramer, a dimer of dimers. One homotetramer interacts with 1 SecA dimer.

The protein resides in the cytoplasm. One of the proteins required for the normal export of preproteins out of the cell cytoplasm. It is a molecular chaperone that binds to a subset of precursor proteins, maintaining them in a translocation-competent state. It also specifically binds to its receptor SecA. This Pectobacterium atrosepticum (strain SCRI 1043 / ATCC BAA-672) (Erwinia carotovora subsp. atroseptica) protein is Protein-export protein SecB.